A 467-amino-acid polypeptide reads, in one-letter code: Mitogen-activated protein kinase kinase kinase 8 (467 aa).

The residue at position 80 (threonine 80) is a Phosphothreonine. Serine 138 and serine 141 each carry phosphoserine. ATP is bound by residues 144–152 and lysine 167; that span reads VPRGAFGKV. Positions 146–388 constitute a Protein kinase domain; it reads RGAFGKVYLA…AADLLKHEAL (243 aa). The Proton acceptor role is filled by aspartate 253. Position 290 is a phosphothreonine (threonine 290). Phosphoserine occurs at positions 400 and 443.

Belongs to the protein kinase superfamily. STE Ser/Thr protein kinase family. MAP kinase kinase kinase subfamily. As to quaternary structure, forms a ternary complex with NFKB1/p105 and TNIP2. Interacts with NFKB1; the interaction increases the stability of MAP3K8 but inhibits its MEK phosphorylation activity, whereas loss of interaction following LPS stimulation leads to its degradation. Interacts with CD40 and TRAF6; the interaction is required for ERK activation. Interacts with KSR2; the interaction inhibits ERK and NF-kappa-B activation. Requires Mg(2+) as cofactor. In terms of processing, autophosphorylated. Expressed in spleen, thymus, liver and lung.

The protein resides in the cytoplasm. The catalysed reaction is L-seryl-[protein] + ATP = O-phospho-L-seryl-[protein] + ADP + H(+). The enzyme catalyses L-threonyl-[protein] + ATP = O-phospho-L-threonyl-[protein] + ADP + H(+). In terms of biological role, required for lipopolysaccharide (LPS)-induced, TLR4-mediated activation of the MAPK/ERK pathway in macrophages, thus being critical for production of the pro-inflammatory cytokine TNF-alpha (TNF) during immune responses. Involved in the regulation of T-helper cell differentiation and IFNG expression in T-cells. Involved in mediating host resistance to bacterial infection through negative regulation of type I interferon (IFN) production. Transduces CD40 and TNFRSF1A signals that activate ERK in B-cells and macrophages, and thus may play a role in the regulation of immunoglobulin production. May also play a role in the transduction of TNF signals that activate JNK and NF-kappa-B in some cell types. In adipocytes, activates MAPK/ERK pathway in an IKBKB-dependent manner in response to IL1B and TNF, but not insulin, leading to induction of lipolysis. Plays a role in the cell cycle. This chain is Mitogen-activated protein kinase kinase kinase 8 (Map3k8), found in Rattus norvegicus (Rat).